Reading from the N-terminus, the 454-residue chain is Glutamyl-tRNA reductase (454 aa).

Residues 50 to 53, Ser103, 108 to 110, and Gln114 contribute to the substrate site; these read TCNR and EDQ. Residue Cys51 is the Nucleophile of the active site. 182–187 contacts NADP(+); sequence GAGEMG. Residues 407 to 454 form a disordered region; it reads LFDPNFGGDTPQPDRPDDIPRAAERGDISGDDLPDDVPNHIAEKVSDG. Composition is skewed to basic and acidic residues over residues 418–434 and 443–454; these read QPDR…RGDI and VPNHIAEKVSDG.

The protein belongs to the glutamyl-tRNA reductase family. Homodimer.

It catalyses the reaction (S)-4-amino-5-oxopentanoate + tRNA(Glu) + NADP(+) = L-glutamyl-tRNA(Glu) + NADPH + H(+). It participates in porphyrin-containing compound metabolism; protoporphyrin-IX biosynthesis; 5-aminolevulinate from L-glutamyl-tRNA(Glu): step 1/2. In terms of biological role, catalyzes the NADPH-dependent reduction of glutamyl-tRNA(Glu) to glutamate 1-semialdehyde (GSA). This is Glutamyl-tRNA reductase from Haloquadratum walsbyi (strain DSM 16790 / HBSQ001).